Reading from the N-terminus, the 176-residue chain is Nucleoside triphosphate/diphosphate phosphatase (176 aa).

Catalysis depends on R23, which acts as the Proton donor. Residues N87, D103, D105, D107, D120, and E123 each contribute to the Mg(2+) site.

This sequence belongs to the Ntdp family. It depends on Mg(2+) as a cofactor.

It catalyses the reaction a ribonucleoside 5'-triphosphate + H2O = a ribonucleoside 5'-diphosphate + phosphate + H(+). The catalysed reaction is a ribonucleoside 5'-diphosphate + H2O = a ribonucleoside 5'-phosphate + phosphate + H(+). Its function is as follows. Has nucleoside phosphatase activity towards nucleoside triphosphates and nucleoside diphosphates. The protein is Nucleoside triphosphate/diphosphate phosphatase (ygaC) of Bacillus subtilis (strain 168).